A 4516-amino-acid polypeptide reads, in one-letter code: Dynein axonemal heavy chain 1 (4516 aa).

The interval 1–1748 is stem; sequence MVTLSISDTL…YIRAVNAEFI (1748 aa). Residues 78–160 form a disordered region; that stretch reads SSGSDKSLKN…RKSPLAGTDK (83 aa). 2 stretches are compositionally biased toward basic and acidic residues: residues 83–97 and 113–129; these read KSLKNGMEECDKEEA and ENHDLEKMLKESSRNPE. AAA regions lie at residues 1749–1956, 2016–2249, 2422–2682, and 2780–2972; these read YGYE…VISA, QAIR…TTVK, TMMP…VFQG, and DYNQ…CCTI. The GPAGTGKT motif signature appears at 1787–1794; that stretch reads GPAGTGKT. 1787 to 1794 lines the ATP pocket; it reads GPAGTGKT. The CFDEFNR motif motif lies at 1837 to 1843; sequence CFDEFNR. Residues 2054–2061, 2460–2467, and 2819–2826 each bind ATP; these read GPTGSGKS, GPTGTGKT, and GVGGSGRS. A stalk region spans residues 2987 to 3285; that stretch reads ATRFLHEIPE…MHKYHFVAKA (299 aa). The stretch at 3293–3394 forms a coiled coil; the sequence is LREAQDDLEV…QDTVENLENM (102 aa). 2 AAA regions span residues 3388–3618 and 3831–4050; these read VENL…EERP and LPAF…SYNS.

It belongs to the dynein heavy chain family. As to quaternary structure, consists of at least two heavy chains and a number of intermediate and light chains. As to expression, expressed in brain.

Its subcellular location is the cytoplasm. The protein resides in the cytoskeleton. It localises to the cilium axoneme. The protein localises to the cell projection. It is found in the cilium. Its subcellular location is the flagellum. Its function is as follows. Force generating protein of cilia required for sperm flagellum motility. Produces force towards the minus ends of microtubules. Dynein has ATPase activity; the force-producing power stroke is thought to occur on release of ADP. Required in spermatozoa for the formation of the inner dynein arms and biogenesis of the axoneme. This Rattus norvegicus (Rat) protein is Dynein axonemal heavy chain 1.